A 327-amino-acid polypeptide reads, in one-letter code: D-alanine--D-alanine ligase (327 aa).

One can recognise an ATP-grasp domain in the interval 113 to 312; it reads KRLWMTYGLA…YEDFVMQVVA (200 aa). An ATP-binding site is contributed by 139–194; the sequence is AADLGLPLIVKPAREGSSIGLTKVTAADQMRAAFEKAAALDNDVIAETFIDGAELT. Mg(2+) is bound by residues Asp266, Glu279, and Asn281.

This sequence belongs to the D-alanine--D-alanine ligase family. Requires Mg(2+) as cofactor. It depends on Mn(2+) as a cofactor.

The protein resides in the cytoplasm. It catalyses the reaction 2 D-alanine + ATP = D-alanyl-D-alanine + ADP + phosphate + H(+). It participates in cell wall biogenesis; peptidoglycan biosynthesis. Functionally, cell wall formation. The sequence is that of D-alanine--D-alanine ligase from Cupriavidus necator (strain ATCC 17699 / DSM 428 / KCTC 22496 / NCIMB 10442 / H16 / Stanier 337) (Ralstonia eutropha).